The following is a 342-amino-acid chain: Transmembrane protein 268 (342 aa).

2 consecutive transmembrane segments (helical) span residues 106 to 126 (AFAVVFYVLVWANIYSTSQMF) and 133 to 153 (AGVLLATLAAFSLTLTLVLVF). Positions 245–267 (VEGPEDLEDAPLLPSTPGPQERP) are disordered.

Interacts with ITGAM; this interaction inhibits ITGAM degradation via the endosome-lysosome pathway. Interacts with ITGB4; this interaction prevents ITGB4 degradation.

The protein localises to the cell membrane. In terms of biological role, stabilizes cell surface expression of ITGAM and participates in the adhesion and migration of phagocytes during bacterial clearance. In Mus musculus (Mouse), this protein is Transmembrane protein 268.